The following is a 146-amino-acid chain: Hemoglobin subunit beta-1 (146 aa).

The Globin domain maps to 2-146 (HWTAEEKALI…VAHALARRYH (145 aa)). His92 lines the heme b pocket.

This sequence belongs to the globin family. Heterotetramer of two alpha chains and two beta chains. As to expression, red blood cells.

Involved in oxygen transport from the lung to the various peripheral tissues. This is Hemoglobin subunit beta-1 from Saara hardwickii (Indian spiny-tailed lizard).